Reading from the N-terminus, the 244-residue chain is Ureidoacrylate amidohydrolase RutB (244 aa).

Catalysis depends on D38, which acts as the Proton acceptor. K147 is an active-site residue. The active-site Nucleophile is the C180.

This sequence belongs to the isochorismatase family. RutB subfamily.

The catalysed reaction is (Z)-3-ureidoacrylate + H2O + H(+) = (Z)-3-aminoacrylate + NH4(+) + CO2. The enzyme catalyses (Z)-3-ureidoacrylate + H2O = (Z)-3-aminoacrylate + carbamate + H(+). It carries out the reaction (Z)-2-methylureidoacrylate + H2O + H(+) = (Z)-2-methylaminoacrylate + NH4(+) + CO2. Its function is as follows. Hydrolyzes ureidoacrylate to form aminoacrylate and carbamate. The carbamate hydrolyzes spontaneously, thereby releasing one of the nitrogen atoms of the pyrimidine ring as ammonia and one of its carbon atoms as CO2. This chain is Ureidoacrylate amidohydrolase RutB, found in Shigella sonnei (strain Ss046).